The primary structure comprises 130 residues: Histone H2A type 1-D (130 aa).

The tract at residues 1 to 22 is disordered; it reads MSGRGKQGGKARAKAKTRSSRA. Ser-2 is subject to N-acetylserine. Position 2 is a phosphoserine; by RPS6KA5 (Ser-2). Position 4 is a citrulline; alternate (Arg-4). The residue at position 4 (Arg-4) is a Symmetric dimethylarginine; by PRMT5; alternate. N6-(2-hydroxyisobutyryl)lysine; alternate is present on residues Lys-6 and Lys-10. Lys-6 is subject to N6-acetyllysine; alternate. Over residues 7–19 the composition is skewed to basic residues; sequence QGGKARAKAKTRS. N6-(beta-hydroxybutyryl)lysine; alternate is present on residues Lys-10 and Lys-14. Lys-10 bears the N6-lactoyllysine; alternate mark. Lys-10 bears the N6-succinyllysine; alternate mark. Residue Lys-14 forms a Glycyl lysine isopeptide (Lys-Gly) (interchain with G-Cter in ubiquitin); alternate linkage. Lys-16 participates in a covalent cross-link: Glycyl lysine isopeptide (Lys-Gly) (interchain with G-Cter in ubiquitin). N6-(2-hydroxyisobutyryl)lysine; alternate is present on Lys-37. Residue Lys-37 is modified to N6-(beta-hydroxybutyryl)lysine; alternate. At Lys-37 the chain carries N6-crotonyllysine; alternate. Residues Lys-75 and Lys-76 each carry the N6-(2-hydroxyisobutyryl)lysine modification. Position 96 is an N6-(2-hydroxyisobutyryl)lysine; alternate (Lys-96). The residue at position 96 (Lys-96) is an N6-(beta-hydroxybutyryl)lysine; alternate. An N6-succinyllysine; alternate modification is found at Lys-96. An N6-glutaryllysine; alternate modification is found at Lys-96. Lys-100 is modified (N6-glutaryllysine). N5-methylglutamine is present on Gln-105. Lys-119 carries the N6-(2-hydroxyisobutyryl)lysine; alternate modification. At Lys-119 the chain carries N6-(beta-hydroxybutyryl)lysine; alternate. Lys-119 and Lys-120 each carry N6-crotonyllysine; alternate. N6-glutaryllysine; alternate occurs at positions 119 and 120. Lys-120 participates in a covalent cross-link: Glycyl lysine isopeptide (Lys-Gly) (interchain with G-Cter in ubiquitin); alternate. Thr-121 carries the post-translational modification Phosphothreonine; by DCAF1. Residue Lys-126 is modified to N6-crotonyllysine; alternate. Position 126 is an N6-glutaryllysine; alternate (Lys-126).

The protein belongs to the histone H2A family. The nucleosome is a histone octamer containing two molecules each of H2A, H2B, H3 and H4 assembled in one H3-H4 heterotetramer and two H2A-H2B heterodimers. The octamer wraps approximately 147 bp of DNA. In terms of processing, deiminated on Arg-4 in granulocytes upon calcium entry. Monoubiquitination of Lys-120 (H2AK119Ub) by RING1, TRIM37 and RNF2/RING2 complex gives a specific tag for epigenetic transcriptional repression and participates in X chromosome inactivation of female mammals. It is involved in the initiation of both imprinted and random X inactivation. Ubiquitinated H2A is enriched in inactive X chromosome chromatin. Ubiquitination of H2A functions downstream of methylation of 'Lys-27' of histone H3 (H3K27me). H2AK119Ub by RNF2/RING2 can also be induced by ultraviolet and may be involved in DNA repair. Monoubiquitination of Lys-120 (H2AK119Ub) by TRIM37 may promote transformation of cells in a number of breast cancers. Following DNA double-strand breaks (DSBs), it is ubiquitinated through 'Lys-63' linkage of ubiquitin moieties by the E2 ligase UBE2N and the E3 ligases RNF8 and RNF168, leading to the recruitment of repair proteins to sites of DNA damage. Ubiquitination at Lys-14 and Lys-16 (H2AK13Ub and H2AK15Ub, respectively) in response to DNA damage is initiated by RNF168 that mediates monoubiquitination at these 2 sites, and 'Lys-63'-linked ubiquitin are then conjugated to monoubiquitin; RNF8 is able to extend 'Lys-63'-linked ubiquitin chains in vitro. Deubiquitinated by USP51 at Lys-14 and Lys-16 (H2AK13Ub and H2AK15Ub, respectively) after damaged DNA is repaired. H2AK119Ub and ionizing radiation-induced 'Lys-63'-linked ubiquitination (H2AK13Ub and H2AK15Ub) are distinct events. Post-translationally, phosphorylation on Ser-2 (H2AS1ph) is enhanced during mitosis. Phosphorylation on Ser-2 by RPS6KA5/MSK1 directly represses transcription. Acetylation of H3 inhibits Ser-2 phosphorylation by RPS6KA5/MSK1. Phosphorylation at Thr-121 (H2AT120ph) by DCAF1 is present in the regulatory region of many tumor suppresor genes and down-regulates their transcription. In terms of processing, glutamine methylation at Gln-105 (H2AQ104me) by FBL is specifically dedicated to polymerase I. It is present at 35S ribosomal DNA locus and impairs binding of the FACT complex. Symmetric dimethylation on Arg-4 by the PRDM1/PRMT5 complex may play a crucial role in the germ-cell lineage. Post-translationally, crotonylation (Kcr) is specifically present in male germ cells and marks testis-specific genes in post-meiotic cells, including X-linked genes that escape sex chromosome inactivation in haploid cells. Crotonylation marks active promoters and enhancers and confers resistance to transcriptional repressors. It is also associated with post-meiotically activated genes on autosomes. In terms of processing, lactylated in macrophages by EP300/P300 by using lactoyl-CoA directly derived from endogenous or exogenous lactate, leading to stimulates gene transcription.

The protein resides in the nucleus. It localises to the chromosome. Functionally, core component of nucleosome. Nucleosomes wrap and compact DNA into chromatin, limiting DNA accessibility to the cellular machineries which require DNA as a template. Histones thereby play a central role in transcription regulation, DNA repair, DNA replication and chromosomal stability. DNA accessibility is regulated via a complex set of post-translational modifications of histones, also called histone code, and nucleosome remodeling. The protein is Histone H2A type 1-D of Homo sapiens (Human).